Consider the following 417-residue polypeptide: Phosphoglycerate kinase 1 (417 aa).

Ser2 is subject to N-acetylserine. Ser2 and Ser4 each carry phosphoserine. An N6-succinyllysine modification is found at Lys6. Lys11 is modified (N6-acetyllysine). Val23, Asp24, Phe25, Asn26, Gln38, and Arg39 together coordinate (2R)-3-phosphoglycerate. Residues 38 to 43 (QRIKAA) are mitochondrial targeting region exposed following cis-trans isomerization by PIN1 and recognized by the TOM complex for mitochondrial translocation of the protein. An N6-acetyllysine; alternate modification is found at Lys48. Lys48 carries the N6-succinyllysine; alternate modification. Ser62, His63, Gly65, and Arg66 together coordinate (2R)-3-phosphoglycerate. Lys75 bears the N6-acetyllysine mark. Phosphotyrosine is present on Tyr76. Lys86 and Lys91 each carry N6-acetyllysine. Lys97 carries the post-translational modification N6-acetyllysine; alternate. Lys97 is subject to N6-(2-hydroxyisobutyryl)lysine; alternate. Leu122 and Arg123 together coordinate (2R)-3-phosphoglycerate. N6-acetyllysine; alternate is present on Lys131. Residue Lys131 is modified to N6-malonyllysine; alternate. The residue at position 146 (Lys146) is an N6-acetyllysine. (2R)-3-phosphoglycerate is bound by residues His170 and Arg171. Residue Lys191 is modified to N6-succinyllysine. Tyr196 carries the post-translational modification Phosphotyrosine. Lys199 carries the N6-acetyllysine modification. Ser203 carries the post-translational modification Phosphoserine; by MAPK1. Gly214 contributes to the ADP binding site. Gly214 lines the CDP pocket. Residues Ala215 and Lys216 each contribute to the AMP site. Ala215 provides a ligand contact to ATP. A Mg(2+)-binding site is contributed by Ala215. An N6-(2-hydroxyisobutyryl)lysine modification is found at Lys216. Residues Ala218 and Asp219 each coordinate Mg(2+). Asp219 serves as a coordination point for CDP. Lys220 is a binding site for AMP. Lys220 serves as a coordination point for ATP. N6-(2-hydroxyisobutyryl)lysine is present on Lys220. An ADP-binding site is contributed by Gly238. Position 238 (Gly238) interacts with CDP. Residue Gly239 coordinates AMP. Position 239 (Gly239) interacts with ATP. N6-acetyllysine occurs at positions 267 and 291. Residue Gly313 coordinates AMP. Gly313 lines the ATP pocket. The residue at position 323 (Lys323) is an N6-(2-hydroxyisobutyryl)lysine. Residues Gly338, Val340, and Phe343 each coordinate CDP. Phe343 is a binding site for ADP. Glu344 is a binding site for AMP. Glu344 contacts ATP. An N6-acetyllysine modification is found at Lys361. ATP contacts are provided by Asp375 and Thr376. Position 375 (Asp375) interacts with Mg(2+).

Belongs to the phosphoglycerate kinase family. Monomer. Interacts with kinase MAPK1/ERK2; the interaction is direct, occurs under hypoxic conditions, and promotes its interaction with PIN1. Interacts with peptidyl-prolyl cis-trans isomerase PIN1; the interaction is direct, occurs under hypoxic conditions, and targets the protein to the mitochondrion by promoting interactions with the TOM complex. Interacts with mitochondrial circRNA mcPGK1 (via its 2nd stem-loop); the interaction is direct and targets the protein to the mitochondrion by promoting interactions with the TOM complex. Interacts with pyruvate dehydrogenase kinase PDK1; the interaction is direct, occurs under hypoxic conditions and leads to PDK1-mediated inhibition of pyruvate dehydrogenase complex activity. The cofactor is Mg(2+). In terms of processing, phosphorylated at Ser-203 by MAPK1/ERK2 under hypoxic conditions, which promotes its mitochondrial targeting. In terms of tissue distribution, mainly expressed in spermatogonia. Localized on the principle piece in the sperm (at protein level). Expression significantly decreased in the testis of elderly men.

It is found in the cytoplasm. The protein resides in the cytosol. Its subcellular location is the mitochondrion matrix. The catalysed reaction is (2R)-3-phosphoglycerate + ATP = (2R)-3-phospho-glyceroyl phosphate + ADP. It catalyses the reaction L-seryl-[protein] + ATP = O-phospho-L-seryl-[protein] + ADP + H(+). It participates in carbohydrate degradation; glycolysis; pyruvate from D-glyceraldehyde 3-phosphate: step 2/5. With respect to regulation, specifically inhibited by heterocyclic compound CBR-470-0. In terms of biological role, catalyzes one of the two ATP producing reactions in the glycolytic pathway via the reversible conversion of 1,3-diphosphoglycerate to 3-phosphoglycerate. Both L- and D- forms of purine and pyrimidine nucleotides can be used as substrates, but the activity is much lower on pyrimidines. In addition to its role as a glycolytic enzyme, it seems that PGK1 acts as a polymerase alpha cofactor protein (primer recognition protein). Acts as a protein kinase when localized to the mitochondrion where it phosphorylates pyruvate dehydrogenase kinase PDK1 to inhibit pyruvate dehydrogenase complex activity and suppress the formation of acetyl-coenzyme A from pyruvate, and consequently inhibit oxidative phosphorylation and promote glycolysis. May play a role in sperm motility. In Homo sapiens (Human), this protein is Phosphoglycerate kinase 1 (PGK1).